The following is a 198-amino-acid chain: Holliday junction resolvase RecU (198 aa).

Residues 1–22 are disordered; that stretch reads MVNYPHKVSSQKRQTSLSQPKN. The span at 11 to 22 shows a compositional bias: polar residues; it reads QKRQTSLSQPKN. Mg(2+) is bound by residues threonine 81, aspartate 83, glutamate 96, and glutamine 115.

It belongs to the RecU family. Mg(2+) is required as a cofactor.

It localises to the cytoplasm. It carries out the reaction Endonucleolytic cleavage at a junction such as a reciprocal single-stranded crossover between two homologous DNA duplexes (Holliday junction).. In terms of biological role, endonuclease that resolves Holliday junction intermediates in genetic recombination. Cleaves mobile four-strand junctions by introducing symmetrical nicks in paired strands. Promotes annealing of linear ssDNA with homologous dsDNA. Required for DNA repair, homologous recombination and chromosome segregation. The protein is Holliday junction resolvase RecU of Streptococcus pneumoniae (strain P1031).